A 64-amino-acid chain; its full sequence is Alpha-conotoxin CnIC (64 aa).

An N-terminal signal peptide occupies residues 1-21 (MGMRMMFTVFLLVVLTTTVVS). A propeptide spanning residues 22 to 47 (FPSDSASDVRDDEAKDERSDMYKSKR) is cleaved from the precursor. Position 48 is a deamidated asparagine; in CnIH; partial (asparagine 48). Disulfide bonds link cysteine 51/cysteine 56 and cysteine 52/cysteine 62. Cysteine 62 is modified (cysteine amide).

It belongs to the conotoxin A superfamily. Expressed by the venom duct.

It is found in the secreted. Its function is as follows. Alpha-conotoxins act on postsynaptic membranes, they bind to the nicotinic acetylcholine receptors (nAChR) and thus inhibit them. In Conus consors (Singed cone), this protein is Alpha-conotoxin CnIC.